We begin with the raw amino-acid sequence, 407 residues long: NAD(P)H-quinone oxidoreductase subunit 1 (407 aa).

9 helical membrane passes run 28–48, 96–116, 127–147, 175–195, 203–223, 267–287, 309–329, 347–367, and 374–394; these read WLPL…IAAV, WLFT…YLVI, ITIG…GALM, LALS…VDIV, LFSF…IFLI, LILA…FIVP, ALVG…LAIL, WKFL…LVLL, and TLPL…AMSL.

This sequence belongs to the complex I subunit 1 family. In terms of assembly, NDH-1 is composed of at least 11 different subunits.

It localises to the cell inner membrane. It carries out the reaction a plastoquinone + NADH + (n+1) H(+)(in) = a plastoquinol + NAD(+) + n H(+)(out). The catalysed reaction is a plastoquinone + NADPH + (n+1) H(+)(in) = a plastoquinol + NADP(+) + n H(+)(out). In terms of biological role, NDH-1 shuttles electrons from an unknown electron donor, via FMN and iron-sulfur (Fe-S) centers, to quinones in the respiratory and/or the photosynthetic chain. The immediate electron acceptor for the enzyme in this species is believed to be plastoquinone. Couples the redox reaction to proton translocation, and thus conserves the redox energy in a proton gradient. This chain is NAD(P)H-quinone oxidoreductase subunit 1, found in Gloeobacter violaceus (strain ATCC 29082 / PCC 7421).